We begin with the raw amino-acid sequence, 382 residues long: SOX domain-containing protein dichaete (382 aa).

2 disordered regions span residues Gly53–Ile142 and Tyr346–Tyr382. The segment covering Ala60–Gly69 has biased composition (gly residues). The span at Asn96–Gly123 shows a compositional bias: low complexity. The segment at residues Ile142–Lys210 is a DNA-binding region (HMG box). Positions Pro347–Thr360 are enriched in low complexity.

As to expression, initially expressed in a pair-rule-like pattern which is rapidly replaced by strong neuroectoderm expression.

The protein resides in the nucleus. Essential for segmentation and CNS development. May modulate the actions of other transcription factors, including gap and pair-rule proteins. The protein is SOX domain-containing protein dichaete (D) of Drosophila melanogaster (Fruit fly).